Reading from the N-terminus, the 289-residue chain is Release factor glutamine methyltransferase (289 aa).

Residues 122 to 126, Asp145, Trp174, and Asn189 each bind S-adenosyl-L-methionine; that span reads GVGSG. Residue 189 to 192 coordinates substrate; that stretch reads NPPY.

The protein belongs to the protein N5-glutamine methyltransferase family. PrmC subfamily.

It catalyses the reaction L-glutaminyl-[peptide chain release factor] + S-adenosyl-L-methionine = N(5)-methyl-L-glutaminyl-[peptide chain release factor] + S-adenosyl-L-homocysteine + H(+). Functionally, methylates the class 1 translation termination release factors RF1/PrfA and RF2/PrfB on the glutamine residue of the universally conserved GGQ motif. This chain is Release factor glutamine methyltransferase, found in Caulobacter vibrioides (strain ATCC 19089 / CIP 103742 / CB 15) (Caulobacter crescentus).